The chain runs to 502 residues: ATP synthase subunit alpha (502 aa).

169 to 176 provides a ligand contact to ATP; that stretch reads GDRQTGKT.

The protein belongs to the ATPase alpha/beta chains family. F-type ATPases have 2 components, CF(1) - the catalytic core - and CF(0) - the membrane proton channel. CF(1) has five subunits: alpha(3), beta(3), gamma(1), delta(1), epsilon(1). CF(0) has three main subunits: a(1), b(2) and c(9-12). The alpha and beta chains form an alternating ring which encloses part of the gamma chain. CF(1) is attached to CF(0) by a central stalk formed by the gamma and epsilon chains, while a peripheral stalk is formed by the delta and b chains.

The protein resides in the cell membrane. It carries out the reaction ATP + H2O + 4 H(+)(in) = ADP + phosphate + 5 H(+)(out). Functionally, produces ATP from ADP in the presence of a proton gradient across the membrane. The alpha chain is a regulatory subunit. The protein is ATP synthase subunit alpha of Desulfitobacterium hafniense (strain Y51).